The primary structure comprises 1310 residues: Adhesion G protein-coupled receptor A3 (1310 aa).

The signal sequence occupies residues 1–27; sequence MEPPPPLLLLPLALLALLWGGERGAAA. Residues 28–70 form the LRRNT domain; that stretch reads LPAGCKHDGRARGTGRAAAAAEGKVVCSSLELAQVLPPDTLPN. Topologically, residues 28-747 are extracellular; sequence LPAGCKHDGR…TELYTPAASL (720 aa). Residues asparagine 70 and asparagine 87 are each glycosylated (N-linked (GlcNAc...) asparagine). LRR repeat units lie at residues 71-92, 95-116, 119-140, and 143-164; these read RTVTLILSNNKISELKNGSFSG, LLERLDLRNNLISRIAPGAFWG, SLKRLDLTNNRIGCLNADVFRG, and NLVRLNLSGNLFTSLSQGTFDY. Asparagine 148, asparagine 195, asparagine 290, asparagine 321, asparagine 422, asparagine 442, asparagine 581, asparagine 641, asparagine 676, and asparagine 717 each carry an N-linked (GlcNAc...) asparagine glycan. The region spanning 176-226 is the LRRCT domain; it reads EYLLCDCNILWMHRWVKERNITVRDTRCVYPKSLQAQPVTGVKQELLTCDP. An Ig-like domain is found at 231–329; the sequence is PSFYMTPSHR…GNNTRTVDIV (99 aa). A disulfide bridge connects residues cysteine 253 and cysteine 313. In terms of domain architecture, GAIN-B spans 572–739; it reads LDKQLSFKCN…AVLMDLTGTE (168 aa). Residues 690–739 form a GPS region; it reads AAQWDFDLLNGQGGWKSDGCCILYSDENITTIQCGSLGNYAVLMDLTGTE. Cysteine 709 and cysteine 723 are disulfide-bonded. A helical membrane pass occupies residues 748–768; sequence LHPVVYTTAITLLLCLLAVII. The Cytoplasmic portion of the chain corresponds to 769–785; the sequence is SYMYHHSLIRISLKSWH. A helical membrane pass occupies residues 786-806; that stretch reads MLVNLCFHILLTCVVFVGGIT. Residues 807 to 815 are Extracellular-facing; it reads QTRNASVCQ. Asparagine 810 is a glycosylation site (N-linked (GlcNAc...) asparagine). Residues 816 to 836 form a helical membrane-spanning segment; that stretch reads AVGIILHYSTLATVLWVGVTA. Residues 837-865 lie on the Cytoplasmic side of the membrane; sequence RNIYKQVTKKAKRCQDPDEPPAPPRPMLR. A helical membrane pass occupies residues 866-886; sequence FYLIGGGIPIIVCGITAAANI. At 887–908 the chain is on the extracellular side; that stretch reads KNYGSRPSAPYCWMAWEPSLGA. Residues 909–929 traverse the membrane as a helical segment; it reads FYGPASFITFVNCMYFLSIFI. The Cytoplasmic portion of the chain corresponds to 930 to 985; the sequence is QLKRHPERKYELKEPTEEQQRLAANENGEINHQDSMSLSLISTSTLENEHSFQSQL. The helical transmembrane segment at 986-1006 threads the bilayer; that stretch reads LGASLTLLLYVILWMFGAMAV. Topologically, residues 1007-1013 are extracellular; it reads SLYYPLD. The chain crosses the membrane as a helical span at residues 1014 to 1034; that stretch reads LVFSFFFGATCLSFSAFMMVH. Over 1035–1310 the chain is Cytoplasmic; sequence HCINREDVRL…TGLWKHETTV (276 aa). Disordered stretches follow at residues 1065–1084, 1187–1208, and 1221–1264; these read PPNSSATNGEAPKCTNSSAE, VEGSVQNGLPKSRPGSNEGHSR, and YNPP…ADLE. Residues 1222-1239 are compositionally biased toward polar residues; that stretch reads NPPQQDSSDACSTLPKSS. Positions 1308-1310 match the PDZ-binding motif; that stretch reads TTV.

It belongs to the G-protein coupled receptor 2 family. Adhesion G-protein coupled receptor (ADGR) subfamily. In terms of assembly, interacts (via PDZ-binding motif) with DLG1. As to expression, expressed by spermatogonial progenitor cells located within the outer cell layer of the seminiferous tubule and by multipotent adult spermatogonial-derived stem cells.

The protein localises to the membrane. Its function is as follows. Orphan receptor that may have a role in planar cell polarity pathway. The protein is Adhesion G protein-coupled receptor A3 (Adgra3) of Mus musculus (Mouse).